A 456-amino-acid polypeptide reads, in one-letter code: PTS system sucrose-specific EIIBC component (456 aa).

Residues 4–87 (EQISCSLLPL…TQAAGISESS (84 aa)) enclose the PTS EIIB type-1 domain. Residue Cys26 is the Phosphocysteine intermediate; for EIIB activity of the active site. In terms of domain architecture, PTS EIIC type-1 spans 107 to 456 (RLLSNIFVPI…LVLKYKTDAE (350 aa)). Helical transmembrane passes span 112-132 (IFVPIIPAIVASGLLMGLLGM), 144-164 (AIYIMLDMCSSAAFIILPILI), 181-201 (TLGGILTHPALTNAWGVAAGF), 213-233 (MIGYQGTVFPVLLAVWFMSIV), 247-267 (LILTPFLTVIISGFIALLIIG), 288-308 (AGWLAGLLFGGLYSVIVITGI), 329-349 (FLLPIWAMANVAQGGACLAVW), 360-380 (ITLPSAFSAMLGITEAAIFGI), 388-408 (FIAALIGGAAGGAWVVSVHVY), and 428-448 (LLNYIIGMVIAFGVAFTVSLV).

It is found in the cell inner membrane. It carries out the reaction N(pros)-phospho-L-histidyl-[protein](out) + sucrose = sucrose 6(G)-phosphate(in) + L-histidyl-[protein]. The phosphoenolpyruvate-dependent sugar phosphotransferase system (sugar PTS), a major carbohydrate active transport system, catalyzes the phosphorylation of incoming sugar substrates concomitantly with their translocation across the cell membrane. This system is involved in sucrose transport. This chain is PTS system sucrose-specific EIIBC component, found in Salmonella typhimurium.